The chain runs to 41 residues: Disintegrin viperistatin (41 aa).

Intrachain disulfides connect cysteine 1/cysteine 10, cysteine 6/cysteine 29, cysteine 7/cysteine 34, and cysteine 19/cysteine 36. A Disintegrin domain is found at 1–41; that stretch reads CTTGPCCRQCKLKPAGTTCWKTSRTSHYCTGKSCDCPVYQG. The Cell attachment site; atypical (KTS) signature appears at 21 to 23; sequence KTS.

As to quaternary structure, monomer. As to expression, expressed by the venom gland.

The protein localises to the secreted. Functionally, potent and highly selective inhibitor of alpha-1/beta-1 (ITGA1/ITGB1) integrin binding to collagen I and IV. Is about 25-fold more potent than obtustatin inhibiting the binding of this integrin to collagen IV. The polypeptide is Disintegrin viperistatin (Daboia palaestinae (Palestine viper)).